The sequence spans 382 residues: Saccharopine dehydrogenase [NAD(+), L-lysine-forming] (382 aa).

Positions 20 and 79 each coordinate L-saccharopine. Residue Lys79 is the Proton acceptor of the active site. The active-site Proton donor is His98. Residue Gln103 coordinates L-saccharopine. Arg132 is a binding site for NAD(+). L-saccharopine-binding residues include Arg133 and Phe137. Residues Gly215–Arg216, Asp239, Thr243, Tyr263, and Val290 contribute to the NAD(+) site. Cys217 and Cys261 form a disulfide bridge. Residue Ser291–Asp293 participates in L-saccharopine binding. Residue Ile330–Leu333 coordinates NAD(+).

It belongs to the AlaDH/PNT family. As to quaternary structure, monomer.

The catalysed reaction is L-saccharopine + NAD(+) + H2O = L-lysine + 2-oxoglutarate + NADH + H(+). The protein operates within amino-acid biosynthesis; L-lysine biosynthesis via AAA pathway; L-lysine from L-alpha-aminoadipate (fungal route): step 3/3. In terms of biological role, catalyzes the NAD(+)-dependent cleavage of saccharopine to L-lysine and 2-oxoglutarate, the final step in the alpha-aminoadipate (AAA) pathway for lysin biosynthesis. The sequence is that of Saccharopine dehydrogenase [NAD(+), L-lysine-forming] from Candida albicans (strain SC5314 / ATCC MYA-2876) (Yeast).